Consider the following 413-residue polypeptide: 2,3-bisphosphoglycerate-independent phosphoglycerate mutase (413 aa).

Belongs to the BPG-independent phosphoglycerate mutase family. A-PGAM subfamily.

The catalysed reaction is (2R)-2-phosphoglycerate = (2R)-3-phosphoglycerate. Its pathway is carbohydrate degradation; glycolysis; pyruvate from D-glyceraldehyde 3-phosphate: step 3/5. In terms of biological role, catalyzes the interconversion of 2-phosphoglycerate and 3-phosphoglycerate. This Sulfolobus acidocaldarius (strain ATCC 33909 / DSM 639 / JCM 8929 / NBRC 15157 / NCIMB 11770) protein is 2,3-bisphosphoglycerate-independent phosphoglycerate mutase.